Consider the following 153-residue polypeptide: MESWLFLAAILIVALLAKNQSLIIATAVVLVLKALPISEKVLPVIQAKGINWGVTVISVAILVPIATGQIGFKELISAFKTPAGFIAVGCGVLVAVLSAKGVGLLAASPEMTVALVFGTIMGVVFLKGIAAGPVIAAGITYTILTIFNLVPIH.

Helical transmembrane passes span 4-24, 52-72, 85-105, and 115-135; these read WLFL…SLII, WGVT…QIGF, FIAV…VGLL, and LVFG…GPVI.

This sequence belongs to the UPF0756 family.

Its subcellular location is the cell membrane. This is UPF0756 membrane protein LCA_1031 from Latilactobacillus sakei subsp. sakei (strain 23K) (Lactobacillus sakei subsp. sakei).